The sequence spans 356 residues: Protein RecA (356 aa).

Residue 71–78 (GPESSGKT) participates in ATP binding.

Belongs to the RecA family.

The protein resides in the cytoplasm. Functionally, can catalyze the hydrolysis of ATP in the presence of single-stranded DNA, the ATP-dependent uptake of single-stranded DNA by duplex DNA, and the ATP-dependent hybridization of homologous single-stranded DNAs. It interacts with LexA causing its activation and leading to its autocatalytic cleavage. The sequence is that of Protein RecA from Synechococcus elongatus (strain ATCC 33912 / PCC 7942 / FACHB-805) (Anacystis nidulans R2).